The chain runs to 137 residues: Putative pre-16S rRNA nuclease (137 aa).

It belongs to the YqgF nuclease family.

The protein localises to the cytoplasm. Could be a nuclease involved in processing of the 5'-end of pre-16S rRNA. The sequence is that of Putative pre-16S rRNA nuclease from Bacillus mycoides (strain KBAB4) (Bacillus weihenstephanensis).